The primary structure comprises 165 residues: MALNLQDKQAIVAEVSEVAKGALSAVVADSRGVTVDKMTELRKAGREAGVYMRVVRNTLLRRVVEGTQFECLKDTFVGPTLIAYSMEHPGAAARLFKDFAKANAKFEVKAAAFEGELIPAAQIDRLATLPTYEEALARLMSTMKEAAAGKLVRTLAAVRDAKEAA.

Belongs to the universal ribosomal protein uL10 family. In terms of assembly, part of the ribosomal stalk of the 50S ribosomal subunit. The N-terminus interacts with L11 and the large rRNA to form the base of the stalk. The C-terminus forms an elongated spine to which L12 dimers bind in a sequential fashion forming a multimeric L10(L12)X complex.

In terms of biological role, forms part of the ribosomal stalk, playing a central role in the interaction of the ribosome with GTP-bound translation factors. The sequence is that of Large ribosomal subunit protein uL10 from Pectobacterium atrosepticum (strain SCRI 1043 / ATCC BAA-672) (Erwinia carotovora subsp. atroseptica).